A 550-amino-acid polypeptide reads, in one-letter code: Lariat debranching enzyme (550 aa).

Cys-8 and His-10 together coordinate a divalent metal cation. Ser-28 is modified (phosphoserine). A divalent metal cation is bound by residues Asp-39 and Asn-84. Residues 124 to 154 form a lariat recognition loop region; sequence SGIFKSHDYRKGHFECPPYNSSTIRSIYHVR. Lys-128 is subject to N6-acetyllysine. Positions 174, 226, and 228 each coordinate a divalent metal cation. A disordered region spans residues 390–550; the sequence is EHHQCGEYEQ…AVDDGDASAE (161 aa). Polar residues predominate over residues 416 to 426; that stretch reads NTDTSALSSIN. Residues 430–445 are compositionally biased toward acidic residues; that stretch reads IMLDEEEEEEEEEEEA. Polar residues predominate over residues 450–483; that stretch reads SDMNTPSVEPASDQASDLSTSFSDIRNLPSSMFV. A phosphoserine mark is found at Ser-470, Ser-480, Ser-484, Ser-485, Ser-489, Ser-491, Ser-494, Ser-505, and Ser-520. Basic and acidic residues predominate over residues 498–528; that stretch reads KCGETVESGDEKDLAKFPLKRLSDEHEPEQR.

Belongs to the lariat debranching enzyme family. Requires Fe(2+) as cofactor. It depends on Zn(2+) as a cofactor. Mn(2+) serves as cofactor.

It is found in the nucleus. Active in presence of diverse metals including Fe(2+), Zn(2+), Mn(2+). Also activated by Ca(2+). Binds two metal cations in two adjacent alpha and beta metal-binding pockets. Functionally, cleaves the 2'-5' phosphodiester linkage at the branch point of excised lariat intron RNA and converts them into linear molecules that can be subsequently degraded, thereby facilitating ribonucleotide turnover. Linked to its role in pre-mRNA processing mechanism, may also participate in retrovirus replication and have an antiviral cell-intrinsic defense function. This is Lariat debranching enzyme (Dbr1) from Mus musculus (Mouse).